A 197-amino-acid polypeptide reads, in one-letter code: GTP cyclohydrolase 1 (197 aa).

Zn(2+)-binding residues include cysteine 88, histidine 91, and cysteine 160.

The protein belongs to the GTP cyclohydrolase I family. In terms of assembly, homomer.

The enzyme catalyses GTP + H2O = 7,8-dihydroneopterin 3'-triphosphate + formate + H(+). It participates in cofactor biosynthesis; 7,8-dihydroneopterin triphosphate biosynthesis; 7,8-dihydroneopterin triphosphate from GTP: step 1/1. The polypeptide is GTP cyclohydrolase 1 (Clostridium beijerinckii (strain ATCC 51743 / NCIMB 8052) (Clostridium acetobutylicum)).